The chain runs to 455 residues: Argininosuccinate lyase (455 aa).

The protein belongs to the lyase 1 family. Argininosuccinate lyase subfamily.

Its subcellular location is the cytoplasm. It catalyses the reaction 2-(N(omega)-L-arginino)succinate = fumarate + L-arginine. It participates in amino-acid biosynthesis; L-arginine biosynthesis; L-arginine from L-ornithine and carbamoyl phosphate: step 3/3. The polypeptide is Argininosuccinate lyase (Shewanella oneidensis (strain ATCC 700550 / JCM 31522 / CIP 106686 / LMG 19005 / NCIMB 14063 / MR-1)).